A 143-amino-acid chain; its full sequence is Large ribosomal subunit protein uL13 (143 aa).

It belongs to the universal ribosomal protein uL13 family. Part of the 50S ribosomal subunit.

This protein is one of the early assembly proteins of the 50S ribosomal subunit, although it is not seen to bind rRNA by itself. It is important during the early stages of 50S assembly. This Dehalococcoides mccartyi (strain ATCC BAA-2100 / JCM 16839 / KCTC 5957 / BAV1) protein is Large ribosomal subunit protein uL13.